A 787-amino-acid polypeptide reads, in one-letter code: Protein translocase subunit SecA (787 aa).

ATP contacts are provided by residues Gln-85, 103–107, and Asp-492; that span reads GEGKT.

It belongs to the SecA family. Monomer and homodimer. Part of the essential Sec protein translocation apparatus which comprises SecA, SecYEG and auxiliary proteins SecDF. Other proteins may also be involved.

The protein localises to the cell membrane. It is found in the cytoplasm. The enzyme catalyses ATP + H2O + cellular proteinSide 1 = ADP + phosphate + cellular proteinSide 2.. In terms of biological role, part of the Sec protein translocase complex. Interacts with the SecYEG preprotein conducting channel. Has a central role in coupling the hydrolysis of ATP to the transfer of proteins into and across the cell membrane, serving as an ATP-driven molecular motor driving the stepwise translocation of polypeptide chains across the membrane. In Lactiplantibacillus plantarum (strain ATCC BAA-793 / NCIMB 8826 / WCFS1) (Lactobacillus plantarum), this protein is Protein translocase subunit SecA.